The sequence spans 255 residues: Geranylgeranylglyceryl phosphate synthase (255 aa).

Mg(2+)-binding residues include Asp34 and Thr64. Residues 182-188, 213-214, and 235-236 contribute to the sn-glycerol 1-phosphate site; these read YLEAGSG, GG, and GN.

The protein belongs to the GGGP/HepGP synthase family. Group II subfamily. Mg(2+) serves as cofactor.

It localises to the cytoplasm. The catalysed reaction is sn-glycerol 1-phosphate + (2E,6E,10E)-geranylgeranyl diphosphate = sn-3-O-(geranylgeranyl)glycerol 1-phosphate + diphosphate. It functions in the pathway membrane lipid metabolism; glycerophospholipid metabolism. Its function is as follows. Prenyltransferase that catalyzes the transfer of the geranylgeranyl moiety of geranylgeranyl diphosphate (GGPP) to the C3 hydroxyl of sn-glycerol-1-phosphate (G1P). This reaction is the first ether-bond-formation step in the biosynthesis of archaeal membrane lipids. In Saccharolobus islandicus (strain M.16.27) (Sulfolobus islandicus), this protein is Geranylgeranylglyceryl phosphate synthase.